We begin with the raw amino-acid sequence, 693 residues long: Oxysterol-binding protein-related protein 2B (693 aa).

Residues 1–15 are compositionally biased toward polar residues; it reads MPLTRSKSLPATENG. Residues 1-22 form a disordered region; that stretch reads MPLTRSKSLPATENGGSDRETL. One can recognise a PH domain in the interval 25–154; sequence GRSVAGILYK…WLQALASTRG (130 aa). Residues 207–239 are a coiled coil; that stretch reads EVQEQIKLLHEERKKLLDALRQLEMANLEAEAS. Disordered regions lie at residues 256–298 and 600–639; these read LGRG…GEPD and EKLP…RMSR. Residues 274–284 show a composition bias toward acidic residues; sequence QEFEDISEEDE. Basic and acidic residues-rich tracts occupy residues 285–294 and 600–635; these read ASFHDTKESF and EKLP…ERRQ. Residues 612-643 adopt a coiled-coil conformation; it reads DQRHLENGEYEKANEEKQRLERRQRMSRQIQE.

Belongs to the OSBP family. In terms of tissue distribution, expressed in roots, leaves, stems and flowers.

Functionally, may be involved in the transport of sterols. The protein is Oxysterol-binding protein-related protein 2B (ORP2B) of Arabidopsis thaliana (Mouse-ear cress).